The sequence spans 433 residues: Histidinol dehydrogenase (433 aa).

Positions 129, 191, and 214 each coordinate NAD(+). Substrate is bound by residues Ser-237, Gln-259, and His-262. Gln-259 and His-262 together coordinate Zn(2+). Active-site proton acceptor residues include Glu-326 and His-327. 4 residues coordinate substrate: His-327, Asp-360, Glu-414, and His-419. Asp-360 is a Zn(2+) binding site. His-419 is a binding site for Zn(2+).

Belongs to the histidinol dehydrogenase family. The cofactor is Zn(2+).

The enzyme catalyses L-histidinol + 2 NAD(+) + H2O = L-histidine + 2 NADH + 3 H(+). The protein operates within amino-acid biosynthesis; L-histidine biosynthesis; L-histidine from 5-phospho-alpha-D-ribose 1-diphosphate: step 9/9. Catalyzes the sequential NAD-dependent oxidations of L-histidinol to L-histidinaldehyde and then to L-histidine. The polypeptide is Histidinol dehydrogenase (Methanosarcina mazei (strain ATCC BAA-159 / DSM 3647 / Goe1 / Go1 / JCM 11833 / OCM 88) (Methanosarcina frisia)).